Here is a 326-residue protein sequence, read N- to C-terminus: tRNA(Ile)-lysidine synthase (326 aa).

33–38 lines the ATP pocket; that stretch reads SGGPDS.

The protein belongs to the tRNA(Ile)-lysidine synthase family.

The protein resides in the cytoplasm. The catalysed reaction is cytidine(34) in tRNA(Ile2) + L-lysine + ATP = lysidine(34) in tRNA(Ile2) + AMP + diphosphate + H(+). Its function is as follows. Ligates lysine onto the cytidine present at position 34 of the AUA codon-specific tRNA(Ile) that contains the anticodon CAU, in an ATP-dependent manner. Cytidine is converted to lysidine, thus changing the amino acid specificity of the tRNA from methionine to isoleucine. The protein is tRNA(Ile)-lysidine synthase of Novosphingobium aromaticivorans (strain ATCC 700278 / DSM 12444 / CCUG 56034 / CIP 105152 / NBRC 16084 / F199).